Consider the following 65-residue polypeptide: Seminal plasma acrosin inhibitor A1 (65 aa).

Positions 1–59 constitute a Kazal-like domain; the sequence is TRKQPNCNVYRSHLFFCTRQMDPICGTNGKSYANPCIFCSEKGLRNQKFDFGHWGHCRE. Cystine bridges form between cysteine 7/cysteine 39, cysteine 17/cysteine 36, and cysteine 25/cysteine 57. O-linked (GalNAc...) serine glycosylation is present at serine 12. The O-linked (GalNAc...) serine glycan is linked to serine 62.

The identity of the O-linked saccharides are not reported in Ref.1. The O-linked polysaccharides on Ser-12 and Ser-62 are probably the mucin type linked to GalNAc. In terms of tissue distribution, seminal plasma.

It is found in the secreted. In terms of biological role, inhibits acrosin. In Sus scrofa (Pig), this protein is Seminal plasma acrosin inhibitor A1.